The primary structure comprises 272 residues: Acyl-[acyl-carrier-protein]--UDP-N-acetylglucosamine O-acyltransferase (272 aa).

Belongs to the transferase hexapeptide repeat family. LpxA subfamily. As to quaternary structure, homotrimer.

The protein localises to the cytoplasm. The catalysed reaction is a (3R)-hydroxyacyl-[ACP] + UDP-N-acetyl-alpha-D-glucosamine = a UDP-3-O-[(3R)-3-hydroxyacyl]-N-acetyl-alpha-D-glucosamine + holo-[ACP]. The protein operates within glycolipid biosynthesis; lipid IV(A) biosynthesis; lipid IV(A) from (3R)-3-hydroxytetradecanoyl-[acyl-carrier-protein] and UDP-N-acetyl-alpha-D-glucosamine: step 1/6. Involved in the biosynthesis of lipid A, a phosphorylated glycolipid that anchors the lipopolysaccharide to the outer membrane of the cell. The protein is Acyl-[acyl-carrier-protein]--UDP-N-acetylglucosamine O-acyltransferase of Rhizobium leguminosarum bv. trifolii (strain WSM2304).